Consider the following 396-residue polypeptide: Deoxyuridine 5'-triphosphate nucleotidohydrolase (396 aa).

Substrate is bound by residues arginine 280 to serine 282 and phenylalanine 380 to glycine 381.

Belongs to the dUTPase family. Mg(2+) serves as cofactor.

It catalyses the reaction dUTP + H2O = dUMP + diphosphate + H(+). Functionally, involved in nucleotide metabolism: produces dUMP, the immediate precursor of thymidine nucleotides and decreases the intracellular concentration of dUTP to avoid uracil incorporation into viral DNA. In Homo sapiens (Human), this protein is Deoxyuridine 5'-triphosphate nucleotidohydrolase.